The sequence spans 184 residues: MTDTPPENEEQHESNVQNENEVEHLQQEIVTLKTELKEKNDKYLMALAESENSRKRLQKERQELMQYALENTLIDFLNPIESMEKALGFATQMSDDVKNWALGFNMILNQFKQIFEEKGIIEYSSIGQKFNPFLHEAVQTEETSEVPEGTILEEFAKGYKIGERPIRVAKVKVAKAPTPKENKE.

The segment covering 1-10 (MTDTPPENEE) has biased composition (acidic residues). Positions 1 to 22 (MTDTPPENEEQHESNVQNENEV) are disordered.

This sequence belongs to the GrpE family. Homodimer.

It is found in the cytoplasm. Functionally, participates actively in the response to hyperosmotic and heat shock by preventing the aggregation of stress-denatured proteins, in association with DnaK and GrpE. It is the nucleotide exchange factor for DnaK and may function as a thermosensor. Unfolded proteins bind initially to DnaJ; upon interaction with the DnaJ-bound protein, DnaK hydrolyzes its bound ATP, resulting in the formation of a stable complex. GrpE releases ADP from DnaK; ATP binding to DnaK triggers the release of the substrate protein, thus completing the reaction cycle. Several rounds of ATP-dependent interactions between DnaJ, DnaK and GrpE are required for fully efficient folding. The polypeptide is Protein GrpE (Chlamydia pneumoniae (Chlamydophila pneumoniae)).